Reading from the N-terminus, the 153-residue chain is Ribosome maturation factor RimP (153 aa).

Belongs to the RimP family.

It localises to the cytoplasm. Functionally, required for maturation of 30S ribosomal subunits. This is Ribosome maturation factor RimP from Marinomonas sp. (strain MWYL1).